Consider the following 245-residue polypeptide: Ribosomal RNA small subunit methyltransferase G (245 aa).

S-adenosyl-L-methionine contacts are provided by residues Gly-80, Phe-85, 103–105, 131–132, and Arg-150; these read DAT and AE.

This sequence belongs to the methyltransferase superfamily. RNA methyltransferase RsmG family.

It is found in the cytoplasm. Its function is as follows. Specifically methylates the N7 position of a guanine in 16S rRNA. In Deinococcus geothermalis (strain DSM 11300 / CIP 105573 / AG-3a), this protein is Ribosomal RNA small subunit methyltransferase G.